A 120-amino-acid polypeptide reads, in one-letter code: Small ribosomal subunit protein uS12c (120 aa).

Belongs to the universal ribosomal protein uS12 family. Part of the 30S ribosomal subunit.

Its subcellular location is the plastid. The protein resides in the apicoplast. In terms of biological role, with S4 and S5 plays an important role in translational accuracy. Located at the interface of the 30S and 50S subunits. The polypeptide is Small ribosomal subunit protein uS12c (rps12) (Eimeria tenella (Coccidian parasite)).